A 348-amino-acid chain; its full sequence is Aspartate carbamoyltransferase catalytic subunit (348 aa).

2 residues coordinate carbamoyl phosphate: arginine 59 and threonine 60. An L-aspartate-binding site is contributed by lysine 87. The carbamoyl phosphate site is built by arginine 109, histidine 142, and glutamine 145. Arginine 182 and arginine 253 together coordinate L-aspartate. Glycine 294 and proline 295 together coordinate carbamoyl phosphate.

The protein belongs to the aspartate/ornithine carbamoyltransferase superfamily. ATCase family. In terms of assembly, heterododecamer (2C3:3R2) of six catalytic PyrB chains organized as two trimers (C3), and six regulatory PyrI chains organized as three dimers (R2).

It catalyses the reaction carbamoyl phosphate + L-aspartate = N-carbamoyl-L-aspartate + phosphate + H(+). Its pathway is pyrimidine metabolism; UMP biosynthesis via de novo pathway; (S)-dihydroorotate from bicarbonate: step 2/3. In terms of biological role, catalyzes the condensation of carbamoyl phosphate and aspartate to form carbamoyl aspartate and inorganic phosphate, the committed step in the de novo pyrimidine nucleotide biosynthesis pathway. This Prochlorococcus marinus (strain MIT 9303) protein is Aspartate carbamoyltransferase catalytic subunit.